The sequence spans 601 residues: Glutamine--fructose-6-phosphate aminotransferase [isomerizing] (601 aa).

Cysteine 2 acts as the Nucleophile; for GATase activity in catalysis. In terms of domain architecture, Glutamine amidotransferase type-2 spans 2-218 (CGIVGYIGYD…DHEIVIVKRD (217 aa)). SIS domains are found at residues 284 to 423 (IIND…NHGR) and 453 to 591 (IATD…VDKP). Catalysis depends on lysine 596, which acts as the For Fru-6P isomerization activity.

As to quaternary structure, homodimer.

It localises to the cytoplasm. The catalysed reaction is D-fructose 6-phosphate + L-glutamine = D-glucosamine 6-phosphate + L-glutamate. In terms of biological role, catalyzes the first step in hexosamine metabolism, converting fructose-6P into glucosamine-6P using glutamine as a nitrogen source. The protein is Glutamine--fructose-6-phosphate aminotransferase [isomerizing] of Staphylococcus epidermidis (strain ATCC 35984 / DSM 28319 / BCRC 17069 / CCUG 31568 / BM 3577 / RP62A).